A 456-amino-acid polypeptide reads, in one-letter code: Glycerol-3-phosphate dehydrogenase [NAD(+)] At3g07690, cytosolic (456 aa).

NAD(+) contacts are provided by residues 41–46 (GAGAWG), Lys189, and Ala228. Lys189 contacts substrate. Lys278 serves as the catalytic Proton acceptor. 2 residues coordinate NAD(+): Arg340 and Gln368. 340-341 (RN) serves as a coordination point for substrate.

The protein belongs to the NAD-dependent glycerol-3-phosphate dehydrogenase family. Homodimer.

The protein localises to the cytoplasm. It carries out the reaction sn-glycerol 3-phosphate + NAD(+) = dihydroxyacetone phosphate + NADH + H(+). Functionally, required for glycerol-3-phosphate (G3P) accumulation during systemic acquired resistance (SAR) establishment. This Arabidopsis thaliana (Mouse-ear cress) protein is Glycerol-3-phosphate dehydrogenase [NAD(+)] At3g07690, cytosolic.